A 214-amino-acid chain; its full sequence is MDKKKNISMAVIRRLPKYHRYLEELLKSDVDRISSKELSEKIGFTASQIRQDLNCFGDFGQQGYGYNVKDLSREVDNILGLTKMYNTIIIGAGNIGQAIANYINFQKMGFDLKAIFDINPKLIGLKIQDVEVRDVDNIDGFLQKNKIDIGIICVPSKNAQKVCDIIVKNNVNGIWNFAPVDLMTPENVIVENVHLSESLLTLSCLLQEVNKSRD.

The H-T-H motif DNA-binding region spans Lys-17–Phe-56. Residue Gly-91–Gly-96 participates in NAD(+) binding.

The protein belongs to the transcriptional regulatory Rex family. In terms of assembly, homodimer.

It localises to the cytoplasm. In terms of biological role, modulates transcription in response to changes in cellular NADH/NAD(+) redox state. In Clostridium acetobutylicum (strain ATCC 824 / DSM 792 / JCM 1419 / IAM 19013 / LMG 5710 / NBRC 13948 / NRRL B-527 / VKM B-1787 / 2291 / W), this protein is Redox-sensing transcriptional repressor Rex.